Reading from the N-terminus, the 204-residue chain is Holliday junction branch migration complex subunit RuvA (204 aa).

The tract at residues 1–64 is domain I; the sequence is MIGKLKGTIE…EDQIRLFGFM (64 aa). Residues 65 to 143 are domain II; that stretch reads AVLEREWFNL…AFAGEATNIG (79 aa). Positions 144–151 are flexible linker; sequence FKQELGEG. Residues 152 to 204 form a domain III region; that stretch reads VAPAPVSDAVSALTNLGYSRDQAANAIAAAMKVAGDEADSAKLIRLGLKELSR.

This sequence belongs to the RuvA family. In terms of assembly, homotetramer. Forms an RuvA(8)-RuvB(12)-Holliday junction (HJ) complex. HJ DNA is sandwiched between 2 RuvA tetramers; dsDNA enters through RuvA and exits via RuvB. An RuvB hexamer assembles on each DNA strand where it exits the tetramer. Each RuvB hexamer is contacted by two RuvA subunits (via domain III) on 2 adjacent RuvB subunits; this complex drives branch migration. In the full resolvosome a probable DNA-RuvA(4)-RuvB(12)-RuvC(2) complex forms which resolves the HJ.

The protein resides in the cytoplasm. Functionally, the RuvA-RuvB-RuvC complex processes Holliday junction (HJ) DNA during genetic recombination and DNA repair, while the RuvA-RuvB complex plays an important role in the rescue of blocked DNA replication forks via replication fork reversal (RFR). RuvA specifically binds to HJ cruciform DNA, conferring on it an open structure. The RuvB hexamer acts as an ATP-dependent pump, pulling dsDNA into and through the RuvAB complex. HJ branch migration allows RuvC to scan DNA until it finds its consensus sequence, where it cleaves and resolves the cruciform DNA. The protein is Holliday junction branch migration complex subunit RuvA of Rhizobium rhizogenes (strain K84 / ATCC BAA-868) (Agrobacterium radiobacter).